Consider the following 169-residue polypeptide: Ribosome maturation factor RimM (169 aa).

The 76-residue stretch at 92–167 (PKDTYFICDI…YMKIKVVEGL (76 aa)) folds into the PRC barrel domain.

This sequence belongs to the RimM family. As to quaternary structure, binds ribosomal protein uS19.

Its subcellular location is the cytoplasm. Functionally, an accessory protein needed during the final step in the assembly of 30S ribosomal subunit, possibly for assembly of the head region. Essential for efficient processing of 16S rRNA. May be needed both before and after RbfA during the maturation of 16S rRNA. It has affinity for free ribosomal 30S subunits but not for 70S ribosomes. In Caldicellulosiruptor bescii (strain ATCC BAA-1888 / DSM 6725 / KCTC 15123 / Z-1320) (Anaerocellum thermophilum), this protein is Ribosome maturation factor RimM.